The sequence spans 220 residues: MMKCLFLLCLCLLPIVVFSSTFTSQNLIDLPSESPLPKPVLDTNGKELNPNSSYRIISIGRGALGGDVYLGKSPNSDGPCPDGVFRYNSDVGPSGTFVRFIPLSGGIFEDQLLNIQFNIATVKLCVSYTIWKVGNLNAYFRTMLLETGGTIGQADSSYFKIVKLSNFGYNLLYCPITPPFLCPFCRDDNFCAKVGVVIQNGKRRLALVNENPLDVLFQEV.

The signal sequence occupies residues 1 to 23 (MMKCLFLLCLCLLPIVVFSSTFT). A propeptide spanning residues 24 to 32 (SQNLIDLPS) is cleaved from the precursor. The Vacuolar targeting signal motif lies at 26 to 31 (NLIDLP). N-linked (GlcNAc...) asparagine glycosylation is present at N51. Cystine bridges form between C80/C125 and C174/C185.

Belongs to the protease inhibitor I3 (leguminous Kunitz-type inhibitor) family. Tubers.

The protein localises to the vacuole. Its function is as follows. Inhibitor of cathepsin D (aspartic protease). May also inhibit trypsin and chymotrypsin (serine proteases). Protects the plant by inhibiting proteases of invading organisms. The sequence is that of Aspartic protease inhibitor 2 from Solanum tuberosum (Potato).